The sequence spans 4462 residues: Dynein axonemal heavy chain 17 (4462 aa).

The interval 1–1808 is stem; it reads MTMAPDVRLE…FANICDAQIQ (1808 aa). TPR repeat units follow at residues 1019–1052 and 1702–1736; these read TWTD…VSKC and IWWT…QLNV. 4 AAA regions span residues 1809-2030, 2090-2311, 2417-2665, and 2763-3012; these read YSYE…VLVV, KIIK…FGFK, ELDP…IFQG, and SYNE…ERRY. Residues 1847–1854, 2128–2135, 2455–2462, and 2801–2808 each bind ATP; these read GPAGTGKT, GNAGSGKS, GNAGTGKS, and GVGGSGKQ. 2 coiled-coil regions span residues 3027-3086 and 3257-3309; these read YQNL…LIQV and DVAP…EKIK. A stalk region spans residues 3027-3313; that stretch reads YQNLLAKKRT…TAEKIKCQQE (287 aa). AAA regions lie at residues 3405–3632 and 3842–4068; these read LTDD…EIEE and IKNF…VLYN. The TPR 3 repeat unit spans residues 4147 to 4182; it reads PESPYLYGLHPNAEIGFLTVTSEKLFRTVLEMQPKE.

It belongs to the dynein heavy chain family. In terms of assembly, consists of at least two heavy chains and a number of intermediate and light chains. In terms of tissue distribution, expressed in testis. Expressed in spermatozoa (at protein level). Not detected in airway epithelial cells (at protein level).

Its subcellular location is the cytoplasm. It localises to the cytoskeleton. It is found in the flagellum axoneme. Its function is as follows. Force generating protein component of the outer dynein arms (ODAs) in the sperm flagellum. Produces force towards the minus ends of microtubules. Dynein has ATPase activity; the force-producing power stroke is thought to occur on release of ADP. Plays a major role in sperm motility, implicated in sperm flagellar assembly and beating. The protein is Dynein axonemal heavy chain 17 of Homo sapiens (Human).